Here is a 229-residue protein sequence, read N- to C-terminus: Cell division topological specificity factor homolog, chloroplastic (229 aa).

A chloroplast-targeting transit peptide spans 1 to 30 (MAMSSGTLRISATLVSPYHHHHRNRLSLPS). Positions 35-141 (VDFTGFISNG…KMILFSDRCD (107 aa)) are interaction with MIND1. The homodimerization stretch occupies residues 142–169 (VSDEAKRKIVNNIIHALSDFVEIESEEK).

The protein belongs to the MinE family. In terms of assembly, homodimer. Interacts with MIND1. These interactions are required for proper intraplastidic localization. Binds to ARC3. In terms of tissue distribution, expressed in green tissues, especially at the shoot apex. Also present in leaves, stems, buds, and flowers, especially in sepals, siliques (tip and base), and anthers (mostly in pollen grains).

Its subcellular location is the plastid. It is found in the chloroplast. Acts as a topological specificity factor during plastid division and specify plastid constriction sites (such as the Z-ring) in a MCD1-dependent manner. Especially involved in epidermal plastids division in a FTSZ1-dependent manner. Required for the proper formation of FtsZ rings at the division site in nongreen plastids (e.g. etioplasts). May contribute to gravitropism in stems and hypocotyls. Stimulates MIND1 ATPase activity. In cooperation with MIND1, prevents FtsZ ring formation anywhere outside of the mid-plastids. The sequence is that of Cell division topological specificity factor homolog, chloroplastic from Arabidopsis thaliana (Mouse-ear cress).